The primary structure comprises 1006 residues: Transcription factor tau subunit sfc4 (1006 aa).

Residues Gly-64–Asp-91 are disordered. Positions Trp-66–Ser-80 are enriched in acidic residues. TPR repeat units lie at residues Gln-133 to Val-166, His-205 to Asn-238, Ala-277 to Tyr-310, His-396 to Tyr-429, Trp-431 to Gln-464, and Ile-466 to Asn-499. Residues Leu-506–Leu-554 are a coiled coil. 2 TPR repeats span residues Pro-841–Cys-874 and Gln-924–Ser-957.

As to quaternary structure, component of the TFIIIC complex including sfc1, sfc3, sfc4, sfc6 and sfc7. The subunits are organized in two globular domains, tauA and tauB, connected by a proteolysis-sensitive and flexible linker. Interacts with sfc1, sfc3 and sfc6. In terms of processing, phosphorylated.

It localises to the nucleus. Functionally, TFIIIC mediates tRNA and 5S RNA gene activation by binding to intragenic promoter elements. Upstream of the transcription start site, TFIIIC assembles the initiation complex TFIIIB-TFIIIC-tDNA, which is sufficient for RNA polymerase III recruitment and function. Part of the tauA domain of TFIIIC that binds boxA DNA promoter sites of tRNA and similar genes. Sfc4 is the TFIIIB assembling subunit of TFIIIC. The polypeptide is Transcription factor tau subunit sfc4 (Schizosaccharomyces pombe (strain 972 / ATCC 24843) (Fission yeast)).